We begin with the raw amino-acid sequence, 150 residues long: Protein SprT-like (150 aa).

A SprT-like domain is found at L6–R147. Residue H67 participates in Zn(2+) binding. The active site involves E68. H71 provides a ligand contact to Zn(2+).

It belongs to the SprT family. Zn(2+) is required as a cofactor.

It localises to the cytoplasm. The protein is Protein SprT-like (ydcK) of Bacillus subtilis (strain 168).